The following is a 154-amino-acid chain: Pseudo histidine-containing phosphotransfer protein 6 (154 aa).

Residue Met-1 is modified to N-acetylmethionine. The HPt domain occupies 41–137 (SPNFVYDVIN…HYLKNMMHEL (97 aa)).

Interacts with AHK5.

It localises to the cytoplasm. Its subcellular location is the cytosol. The protein resides in the nucleus. Functions as a two-component phosphorelay mediator between cytokinin sensor histidine kinases and response regulators (B-type ARRs). Plays an important role in propagating cytokinin signal transduction. The sequence is that of Pseudo histidine-containing phosphotransfer protein 6 (AHP6) from Arabidopsis thaliana (Mouse-ear cress).